The following is a 98-amino-acid chain: Aspartyl/glutamyl-tRNA(Asn/Gln) amidotransferase subunit C (98 aa).

This sequence belongs to the GatC family. In terms of assembly, heterotrimer of A, B and C subunits.

It catalyses the reaction L-glutamyl-tRNA(Gln) + L-glutamine + ATP + H2O = L-glutaminyl-tRNA(Gln) + L-glutamate + ADP + phosphate + H(+). The catalysed reaction is L-aspartyl-tRNA(Asn) + L-glutamine + ATP + H2O = L-asparaginyl-tRNA(Asn) + L-glutamate + ADP + phosphate + 2 H(+). In terms of biological role, allows the formation of correctly charged Asn-tRNA(Asn) or Gln-tRNA(Gln) through the transamidation of misacylated Asp-tRNA(Asn) or Glu-tRNA(Gln) in organisms which lack either or both of asparaginyl-tRNA or glutaminyl-tRNA synthetases. The reaction takes place in the presence of glutamine and ATP through an activated phospho-Asp-tRNA(Asn) or phospho-Glu-tRNA(Gln). In Bifidobacterium adolescentis (strain ATCC 15703 / DSM 20083 / NCTC 11814 / E194a), this protein is Aspartyl/glutamyl-tRNA(Asn/Gln) amidotransferase subunit C.